The sequence spans 288 residues: MKDRTQELRTAKDSDDDDDVTVTVDRDRFMDEFFEQVEEIRGFIDKIAENVEEVKRKHSAILASPNPDEKTKEELEELMSDIKKTANKVRSKLKSIEQSIEQEEGLNRSSADLRIRKTQHSTLSRKFVEVMSEYNATQSDYRERCKGRIQRQLEITGRTTTSEELEDMLESGNPAIFASGIIMDSSISKQALSEIETRHSEIIKLENSIRELHDMFMDMAMLVESQGEMIDRIEYNVEHAVDYVERAVSDTKKAVKYQSKARRKKIMIIICCVILGIIIASTIGGIFG.

The segment covering 1 to 13 (MKDRTQELRTAKD) has biased composition (basic and acidic residues). The tract at residues 1–20 (MKDRTQELRTAKDSDDDDDV) is disordered. Residues 1–265 (MKDRTQELRT…KYQSKARRKK (265 aa)) lie on the Cytoplasmic side of the membrane. Residues Ser-14, Ser-64, and Ser-95 each carry the phosphoserine modification. A coiled-coil region spans residues 68–109 (DEKTKEELEELMSDIKKTANKVRSKLKSIEQSIEQEEGLNRS). The residue at position 188 (Ser-188) is a Phosphoserine; by DAPK1. Residues 192–254 (LSEIETRHSE…ERAVSDTKKA (63 aa)) enclose the t-SNARE coiled-coil homology domain. Glycyl lysine isopeptide (Lys-Gly) (interchain with G-Cter in SUMO) cross-links involve residues Lys-252, Lys-253, and Lys-256. The helical; Anchor for type IV membrane protein transmembrane segment at 266–288 (IMIIICCVILGIIIASTIGGIFG) threads the bilayer.

It belongs to the syntaxin family. In terms of assembly, part of the SNARE core complex containing SNAP25, VAMP2 and STX1A; this complex constitutes the basic catalytic machinery of the complex neurotransmitter release apparatus. The SNARE complex interacts with CPLX1. Interacts with STXBP1. The interaction with STXBP1 promotes assembly of the SNARE complex. Interacts (via C-terminus) with KCNB1 (via C-terminus); the interaction increases in a calcium-dependent manner and induces a pore-independent enhancement of exocytosis in neuroendocrine cells, chromaffin cells, pancreatic beta cells and from the soma of dorsal root ganglia (DRG) neurons. Interacts with SYTL4. Interacts with STXBP6. Interacts with PLCL1 (via C2 domain). Interacts with OTOF. Interacts with LGI3. Interacts (via the H3 domain) with SLC6A4 (via the N-terminus); this interaction regulates SLC4A6 channel conductance in thalamocortical neurons. Interacts with SYT6 and SYT8; the interaction is Ca(2+)-dependent. Interacts with VAMP8. Interacts with SNAP23. Interacts with VAPA and SYBU. Interacts with PRRT2. Interacts with SEPT8. Interacts with STXBP5L. Interacts with synaptotagmin-1/SYT1. Interacts with SEPTIN5; in the cerebellar cortex. Interacts with SEPTIN4; in the striatum. In terms of processing, phosphorylated by CK2. Phosphorylation at Ser-188 by DAPK1 significantly decreases its interaction with STXBP1. Post-translationally, (Microbial infection) Targeted and hydrolyzed by C.botulinum neurotoxin type C (BoNT/C), which hydrolyzes the 253-Lys-|-Ala-254 bond. Cleavage inhibits neurotransmitter release. Phosphorylated by CK2. Phosphorylation at Ser-188 by DAPK1 significantly decreases its interaction with STXBP1. In terms of processing, sumoylated, sumoylation is required for regulation of synaptic vesicle endocytosis. As to expression, expressed predominantly in cerebral cortex, hippocampus, cerebellum, adrenal medulla and retina with weak expression detected in non-neuronal tissues.

The protein localises to the cytoplasmic vesicle. It is found in the secretory vesicle. The protein resides in the synaptic vesicle membrane. It localises to the cell membrane. Its subcellular location is the synapse. The protein localises to the synaptosome. In terms of biological role, plays an essential role in hormone and neurotransmitter calcium-dependent exocytosis and endocytosis. Part of the SNARE (Soluble NSF Attachment Receptor) complex composed of SNAP25, STX1A and VAMP2 which mediates the fusion of synaptic vesicles with the presynaptic plasma membrane. STX1A and SNAP25 are localized on the plasma membrane while VAMP2 resides in synaptic vesicles. The pairing of the three SNAREs from the N-terminal SNARE motifs to the C-terminal anchors leads to the formation of the SNARE complex, which brings membranes into close proximity and results in final fusion. Participates in the calcium-dependent regulation of acrosomal exocytosis in sperm. Also plays an important role in the exocytosis of hormones such as insulin or glucagon-like peptide 1 (GLP-1). The polypeptide is Syntaxin-1A (Stx1a) (Rattus norvegicus (Rat)).